Consider the following 839-residue polypeptide: Katanin p80 WD40 repeat-containing subunit B1 homolog KTN80.3 (839 aa).

WD repeat units lie at residues 14–54, 57–96, 99–138, 141–182, 184–222, 225–265, and 267–304; these read AHSA…AILS, GHSS…VVRT, GHRS…CIHT, GHTR…HEFK, HEGK…LIGS, TETT…DGVD, and GWSN…TEPM. The DWD box motif lies at 115-131; that stretch reads FFASGSLDTNLKIWDIR. 4 disordered regions span residues 303-340, 357-435, 501-561, and 575-648; these read PMSG…LGKL, GKLS…KSAS, LQSK…RTNK, and SLVR…PSNM. 6 stretches are compositionally biased toward polar residues: residues 307-334, 375-385, 411-435, 501-533, 589-602, and 630-648; these read GATQ…NSSK, TGRSSVSQSSD, TLSS…KSAS, LQSK…QSQP, DLIS…SSPT, and VSSS…PSNM.

The protein belongs to the WD repeat KATNB1 family. Component of KTN80-KTN1 complexes composed of a hexamer of KTN1-KTN80 heterodimers that sense microtubule (MT) geometry to confer precise MT severing. Interacts directly with AAA1/KTN1 and KTN80.1, and weakly with KTN80.4. Expressed in siliques, flowers, leaves, stems and roots.

Its subcellular location is the cytoplasm. The protein localises to the cytoskeleton. Functionally, may participate in a complex which severs microtubules in an ATP-dependent manner. Microtubule severing may promote rapid reorganization of cellular microtubule arrays. Confers precision to microtubule (MT) severing by specific targeting of KTN1 to MT cleavage sites such as crossover or branching nucleation sites. Together with other KTN80s, regulates cell elongation by modulating MT organization. In Arabidopsis thaliana (Mouse-ear cress), this protein is Katanin p80 WD40 repeat-containing subunit B1 homolog KTN80.3.